Here is a 287-residue protein sequence, read N- to C-terminus: uncharacterized protein (287 aa).

10 helical membrane-spanning segments follow: residues 4-24 (TTNG…SLPA), 36-56 (FLTV…LLIF), 66-86 (LISL…LTAL), 93-113 (SAHA…FGVL), 122-142 (VFWI…LIQG), 148-168 (LGDA…AEGA), 179-199 (VISW…FFFT), 208-228 (VPAL…GFVF), 237-259 (GIAA…ASVI), and 264-286 (VGWA…RRFA). EamA domains lie at 16 to 139 (LIFS…GFAL) and 158 to 284 (VVCG…AARR).

Belongs to the EamA transporter family.

It is found in the cell membrane. This is an uncharacterized protein from Bacillus subtilis (strain 168).